A 1220-amino-acid chain; its full sequence is MRFGLPSKLELTPPFRIGIRTQLTALVSIVALGSLIILAVTTGVYFTSNYKNLRSDRLYIAAQLKSSQIDQTLNYLYYQAYYLASRDALQSSLTSYVAGNKSADNWVDSLSVIQKFLSSSNLFYVAKVYDSSFNAVLNATNNGTGDLIPEDVLDSLFPLSTDTPLPSSLETIGILTDPVLNSTDYLMSMSLPIFANPSIILTDSRVYGYITIIMSAEGLKSVFNDTTALEHSTIAIISAVYNSQGKASGYHFVFPPYGSRSDLPQKVFSIKNDTFISSAFRNGKGGSLKQTNILSTRNTALGYSPCSFNLVNWVAIVSQPESVFLSPATKLAKIITGTVIAIGVFVILLTLPLAHWAVQPIVRLQKATELITEGRGLRPSTPRTISRASSFKRGFSSGFAVPSSLLQFNTAEAGSTTSVSGHGGSGHGSGAAFSANSSMKSAINLGNEKMSPPEEENKIPNNHTDAKISMDGSLNHDLLGPHSLRHNDTDRSSNRSHILTTSANLTEARLPDYRRLFSDELSDLTETFNTMTDALDQHYALLEERVRARTKQLEAAKIEAEAANEAKTVFIANISHELRTPLNGILGMTAISMEETDVNKIRNSLKLIFRSGELLLHILTELLTFSKNVLQRTKLEKRDFCITDVALQIKSIFGKVAKDQRVRLSISLFPNLIRTMVLWGDSNRIIQIVMNLVSNALKFTPVDGTVDVRMKLLGEYDKELSEKKQYKEVYIKKGTEVTENLETTDKYDLPTLSNHRKSVDLESSATSLGSNRDTSTIQEEITKRNTVANESIYKKVNDREKASNDDVSSIVSTTTSSYDNAIFNSQFNKAPGSDDEEGGNLGRPIENPKTWVISIEVEDTGPGIDPSLQESVFHPFVQGDQTLSRQYGGTGLGLSICRQLANMMHGTMKLESKVGVGSKFTFTLPLNQTKEISFADMEFPFEDEFNPESRKNRRVKFSVAKSIKSRQSTSSVATPATNRSSLTNDVLPEVRSKGKHETKDVGNPNMGREEKNDNGGLEQLQEKNIKPSICLTGAEVNEQNSLSSKHRSRHEGLGSVNLDRPFLQSTGTATSSRNIPTVKDDDKNETSVKILVVEDNHVNQEVIKRMLNLEGIENIELACDGQEAFDKVKELTSKGENYNMIFMDVQMPKVDGLLSTKMIRRDLGYTSPIVALTAFADDSNIKECLESGMNGFLSKPIKRPKLKTILTEFCAAYQGKKNNK.

Topologically, residues Met1–Gln22 are cytoplasmic. Residues Leu23 to Phe46 traverse the membrane as a helical segment. Topologically, residues Thr47–Lys333 are extracellular. N-linked (GlcNAc...) asparagine glycosylation is found at Asn100, Asn138, Asn142, Asn181, Asn224, and Asn272. Residues Ile334–Ala354 traverse the membrane as a helical segment. Over His355–Lys1220 the chain is Cytoplasmic. Disordered regions lie at residues Gly414–Phe433 and Asn444–Thr500. Residues Ser451–Ile468 show a composition bias toward basic and acidic residues. Position 502 is a phosphoserine (Ser502). The Histidine kinase domain maps to Asn573 to Gln928. His576 carries the post-translational modification Phosphohistidine; by autocatalysis. Phosphoserine is present on residues Ser758 and Ser833. Disordered regions lie at residues Ala960–Gly1016 and Asn1040–Asp1081. Polar residues predominate over residues Ser965–Asn984. Over residues Pro988–Asp1000 the composition is skewed to basic and acidic residues. A phosphoserine mark is found at Ser1041 and Ser1044. Residues Leu1063–Ile1075 are compositionally biased toward polar residues. A Response regulatory domain is found at Lys1089 to Cys1210. 4 residues coordinate Mg(2+): Glu1094, Asp1095, Asp1144, and Lys1195. Position 1144 is a 4-aspartylphosphate (Asp1144).

Interacts with DJP1, MOG1 and YPD1. The phosphorelay mechanism involves the sequential transfer of a phosphate group from His-576 (H1) in the histidine kinase domain (transmitter domain) to Asp-1144 (D1) of the response regulatory domain (receiver domain). This transfer probably occurs between two SLN1 molecules, rather than intramolecularly. The phosphate group is further transferred to 'His-64' (H2) of YPD1 and finally to 'Asp-554' (D2) of SSK1 or 'Asp-427' (D2) of SKN7.

The protein resides in the cell membrane. The catalysed reaction is ATP + protein L-histidine = ADP + protein N-phospho-L-histidine.. Histidine kinase that acts as an osmosensor at the plasma membrane. Part of the bifurcated SLN1-YPD1-SKN7/SSK1 two-component regulatory system, which controls activity of the HOG1 pathway and gene expression in response to changes in the osmolarity of the extracellular environment. Under normal osmotic conditions, the histidine kinase autophosphorylates His-576. This phosphate is subsequently transferred to Asp-1144, from where it is relayed to 'His-64' of the phosphorelay intermediate protein YPD1. Under high osmolarity conditions, the histidine kinase is no longer active. This Saccharomyces cerevisiae (strain ATCC 204508 / S288c) (Baker's yeast) protein is Osmosensing histidine protein kinase SLN1 (SLN1).